Reading from the N-terminus, the 510-residue chain is NAD(P)H-quinone oxidoreductase subunit 2 B, chloroplastic (510 aa).

The next 13 helical transmembrane spans lie at 24–44, 57–77, 99–119, 124–144, 149–169, 183–203, 227–247, 295–315, 323–343, 354–374, 395–415, 418–438, and 484–504; these read LLLF…GLIL, IPWL…ALLF, IFQF…VEYI, MAIA…MFLC, LITI…LSGY, YLLM…WLYG, PGIS…LSPA, WHLL…LIAI, MLAY…IVGD, YMLF…LFGL, ALSL…AGFF, LHLF…IGLL, and MIVC…IIAI.

This sequence belongs to the complex I subunit 2 family. As to quaternary structure, NDH is composed of at least 16 different subunits, 5 of which are encoded in the nucleus.

The protein localises to the plastid. The protein resides in the chloroplast thylakoid membrane. It catalyses the reaction a plastoquinone + NADH + (n+1) H(+)(in) = a plastoquinol + NAD(+) + n H(+)(out). It carries out the reaction a plastoquinone + NADPH + (n+1) H(+)(in) = a plastoquinol + NADP(+) + n H(+)(out). In terms of biological role, NDH shuttles electrons from NAD(P)H:plastoquinone, via FMN and iron-sulfur (Fe-S) centers, to quinones in the photosynthetic chain and possibly in a chloroplast respiratory chain. The immediate electron acceptor for the enzyme in this species is believed to be plastoquinone. Couples the redox reaction to proton translocation, and thus conserves the redox energy in a proton gradient. This Gossypium hirsutum (Upland cotton) protein is NAD(P)H-quinone oxidoreductase subunit 2 B, chloroplastic.